We begin with the raw amino-acid sequence, 118 residues long: Large ribosomal subunit protein bL20 (118 aa).

It belongs to the bacterial ribosomal protein bL20 family.

Functionally, binds directly to 23S ribosomal RNA and is necessary for the in vitro assembly process of the 50S ribosomal subunit. It is not involved in the protein synthesizing functions of that subunit. In Fervidobacterium nodosum (strain ATCC 35602 / DSM 5306 / Rt17-B1), this protein is Large ribosomal subunit protein bL20.